Here is a 503-residue protein sequence, read N- to C-terminus: ATP synthase subunit alpha (503 aa).

169 to 176 (GDRQTGKT) serves as a coordination point for ATP.

The protein belongs to the ATPase alpha/beta chains family. F-type ATPases have 2 components, CF(1) - the catalytic core - and CF(0) - the membrane proton channel. CF(1) has five subunits: alpha(3), beta(3), gamma(1), delta(1), epsilon(1). CF(0) has three main subunits: a(1), b(2) and c(9-12). The alpha and beta chains form an alternating ring which encloses part of the gamma chain. CF(1) is attached to CF(0) by a central stalk formed by the gamma and epsilon chains, while a peripheral stalk is formed by the delta and b chains.

The protein localises to the cell membrane. The catalysed reaction is ATP + H2O + 4 H(+)(in) = ADP + phosphate + 5 H(+)(out). Produces ATP from ADP in the presence of a proton gradient across the membrane. The alpha chain is a regulatory subunit. The sequence is that of ATP synthase subunit alpha from Staphylococcus epidermidis (strain ATCC 35984 / DSM 28319 / BCRC 17069 / CCUG 31568 / BM 3577 / RP62A).